A 570-amino-acid polypeptide reads, in one-letter code: Glycine--tRNA ligase (570 aa).

Arginine 99 and glutamate 165 together coordinate substrate. ATP-binding positions include 197–199 (RNE), 207–212 (LRLREF), 324–325 (EC), and 443–446 (GIDR). A substrate-binding site is contributed by 212-216 (FTQAE). 439–443 (EPSFG) contacts substrate.

This sequence belongs to the class-II aminoacyl-tRNA synthetase family.

The protein localises to the cytoplasm. The enzyme catalyses tRNA(Gly) + glycine + ATP = glycyl-tRNA(Gly) + AMP + diphosphate. Its function is as follows. Catalyzes the attachment of glycine to tRNA(Gly). In Thermococcus kodakarensis (strain ATCC BAA-918 / JCM 12380 / KOD1) (Pyrococcus kodakaraensis (strain KOD1)), this protein is Glycine--tRNA ligase.